The sequence spans 233 residues: Zinc metalloproteinase recombinant fibrinogenase II (233 aa).

Residues 19-215 (KYVETVFVVD…HNPECIDNEP (197 aa)) form the Peptidase M12B domain. Glu-22 and Asp-106 together coordinate Ca(2+). Cystine bridges form between Cys-130/Cys-210, Cys-170/Cys-194, and Cys-172/Cys-177. His-155 lines the Zn(2+) pocket. Glu-156 is an active-site residue. His-159 and His-165 together coordinate Zn(2+). Asn-193 is a glycosylation site (N-linked (GlcNAc...) asparagine). Ca(2+) is bound by residues Cys-210, Asn-213, Asn-228, Leu-230, and Glu-232.

Belongs to the venom metalloproteinase (M12B) family. P-III subfamily. It depends on Zn(2+) as a cofactor. Expressed by the venom gland.

It localises to the secreted. Its activity is regulated as follows. Inhibited by PMSF and EDTA. Slightly inhibited by Cu(2+) and Zn(2+). Not inhibited by aprotinin, SBTI, Ca(2+), Mg(2+), Na(+) and K(+). Functionally, snake venom zinc metalloprotease that acts at several levels. It has direct fibrino(geno)lytic activity (Aalpha chain of fibrinogen is cleaved quickly, Bbeta chain slowly, and gamma chain even more slowly) and degradation of TNF-alpha. These activities permit to protect against sepsis and disseminated intravascular coagulation. It inhibits ADP-induced platelet aggregation in human platelet-rich plasma (IC(50)=65.4 ug/ml). It decreases the activity of complement by degrading human C5, C6 and C9 in vitro, decreasing serum levels of C1q, C3 and C4 in rat, and inhibiting the MAC deposition on HUVECs membrane. This inhibition of complement protects against hyperacute rejection that is the main barrier in xenotransplantation. Has preference for Lys at the P1 position. Cleaves insulin B chain at '36-Val-|-Glu-37', '39-Leu-|-Tyr-40', and '48-Phe-|-Phe-49' bonds. Also cleaves fibronectin and type IV collagen. The polypeptide is Zinc metalloproteinase recombinant fibrinogenase II (Deinagkistrodon acutus (Hundred-pace snake)).